Here is a 200-residue protein sequence, read N- to C-terminus: MIVSFLYFSSLFPTSLRKINLVAGEKHKDRRMKPSLMDSLLGLLRIRIKRGVNLAVRDLNSSDPYVVVKMAKQKLKTRVIYKNVNPEWNEDLTLSVSDPNLTVLLTVYDYDTFTKDDKMGDAEFGIKPFVNALKMHLHDLPSGTIVTTVQPSRDNCLAEESRVIWSDGKLVQDIVLRLRHVECGEVEAQLQWIDLPGKGL.

The 121-residue stretch at 22–142 (VAGEKHKDRR…LKMHLHDLPS (121 aa)) folds into the C2 domain. Residues Arg-57, Asp-58, Asp-63, Asp-109, Tyr-110, Asp-111, and Asp-117 each contribute to the Ca(2+) site.

This sequence belongs to the plant CAR protein family. Binds to PYR/PYL/RCAR abscisic acid intracellular receptors in an ABA-independent manner, both at the plasma membrane and in the nucleus.

The protein resides in the cell membrane. The protein localises to the nucleus. Its function is as follows. Stimulates the GTPase/ATPase activities of Obg-like ATPases. Mediates the transient calcium-dependent interaction of PYR/PYL/RCAR abscisic acid (ABA) receptors with the plasma membrane and thus regulates ABA sensitivity. In Arabidopsis thaliana (Mouse-ear cress), this protein is Protein C2-DOMAIN ABA-RELATED 5.